The sequence spans 377 residues: Prostaglandin reductase-3 (377 aa).

Lys35 bears the N6-acetyllysine mark. NADP(+) is bound by residues Thr185, Ser205, Lys209, Tyr224, Ser247, Ile269, and Tyr275. Ser299 is modified (phosphoserine). Residues 303–305 and Asn361 contribute to the NADP(+) site; that span reads FFL.

This sequence belongs to the zinc-containing alcohol dehydrogenase family. Quinone oxidoreductase subfamily.

The protein localises to the peroxisome. It catalyses the reaction 13,14-dihydro-15-oxo-prostaglandin E2 + NADP(+) = 15-oxoprostaglandin E2 + NADPH + H(+). The enzyme catalyses 13,14-dihydro-15-oxo-prostaglandin E1 + NADP(+) = 15-oxoprostaglandin E1 + NADPH + H(+). The catalysed reaction is 13,14-dihydro-15-oxo-PGF2alpha + NADP(+) = 15-oxoprostaglandin F2alpha + NADPH + H(+). It carries out the reaction 13,14-dihydro-15-oxo-prostaglandin F1alpha + NADP(+) = 15-oxoprostaglandin F1alpha + NADPH + H(+). Its function is as follows. Functions as 15-oxo-prostaglandin 13-reductase and acts on 15-keto-PGE1, 15-keto-PGE2, 15-keto-PGE1-alpha and 15-keto-PGE2-alpha with highest efficiency towards 15-keto-PGE2-alpha. Overexpression represses transcriptional activity of PPARG and inhibits adipocyte differentiation. The chain is Prostaglandin reductase-3 (PTGR3) from Bos taurus (Bovine).